The following is a 609-amino-acid chain: Glutamine--fructose-6-phosphate aminotransferase [isomerizing] (609 aa).

Cys-2 acts as the Nucleophile; for GATase activity in catalysis. Positions 2 to 217 constitute a Glutamine amidotransferase type-2 domain; sequence CGIVGAIAGR…DGDTAEIRRD (216 aa). 2 SIS domains span residues 285 to 425 and 458 to 599; these read AESV…LRGA and WAEC…VDKP. Lys-604 (for Fru-6P isomerization activity) is an active-site residue.

As to quaternary structure, homodimer.

The protein localises to the cytoplasm. The enzyme catalyses D-fructose 6-phosphate + L-glutamine = D-glucosamine 6-phosphate + L-glutamate. Its function is as follows. Catalyzes the first step in hexosamine metabolism, converting fructose-6P into glucosamine-6P using glutamine as a nitrogen source. This Xylella fastidiosa (strain Temecula1 / ATCC 700964) protein is Glutamine--fructose-6-phosphate aminotransferase [isomerizing].